The chain runs to 159 residues: Putative transmembrane protein ORF159 (159 aa).

2 consecutive transmembrane segments (helical) span residues 20-40 and 59-79; these read LLLSLLLLLSTICGVLPLSLF and IIAVDIASAICFIIFCNGFCC. Residues 106-108 carry the Cell attachment site motif; the sequence is RGD.

It localises to the host membrane. The protein is Putative transmembrane protein ORF159 of Acidianus sp. F28 (AFV-2).